The chain runs to 1706 residues: PR domain zinc finger protein 2 (1706 aa).

The region spanning 27-140 (EEVRLFPSAV…PGEELLVWYN (114 aa)) is the SET domain. The disordered stretch occupies residues 154–342 (ERASARSKRS…TPPPHTPRAR (189 aa)). The segment covering 158–183 (ARSKRSSPKSRRGKKKSHENKNKGIR) has biased composition (basic residues). Over residues 185 to 199 (HPTQLKASELDSTFA) the composition is skewed to polar residues. Positions 258–294 (TDCEVNDVEEEELEEEEELEEEEEEELGEDGVEEADM) are enriched in acidic residues. The span at 299 to 313 (SAKEPEIRCEEKPED) shows a compositional bias: basic and acidic residues. 2 consecutive C2H2-type zinc fingers follow at residues 355–377 (FPCQHCERKFATKQGLERHMHIH) and 385–407 (FKCKYCGKRFGTQINRRRHERRH). 3 disordered regions span residues 400 to 446 (RRRH…QLGQ), 492 to 542 (RRHQ…EEEG), and 618 to 655 (LLKDSPSSTNCESKKRRTASPPVLPKIKTETESDSTAP). Ser-416 is subject to Phosphoserine. Over residues 427–439 (DGKGENVTSKDES) the composition is skewed to basic and acidic residues. The C2H2-type 3 zinc finger occupies 476 to 499 (HPCKYCKKVFGTHTNMRRHQRRVH). Position 637 is a phosphoserine (Ser-637). Glycyl lysine isopeptide (Lys-Gly) (interchain with G-Cter in SUMO2) cross-links involve residues Lys-645, Lys-684, and Lys-686. Disordered stretches follow at residues 724 to 794 (TSSR…SPPC), 823 to 1075 (SGVK…SSVV), and 1088 to 1112 (VTFKQEESESEGLKPKEEAPPAGGQ). Positions 733–743 (SSPPSSPQHSP) are enriched in low complexity. At Ser-738 the chain carries Phosphoserine. Lys-769 participates in a covalent cross-link: Glycyl lysine isopeptide (Lys-Gly) (interchain with G-Cter in SUMO2). Phosphoserine is present on residues Ser-776, Ser-780, and Ser-791. Polar residues predominate over residues 823 to 832 (SGVKQKSEGT). The span at 846–863 (SVHKKPCDSEGKEFKENH) shows a compositional bias: basic and acidic residues. Residues Lys-860 and Lys-870 each participate in a glycyl lysine isopeptide (Lys-Gly) (interchain with G-Cter in SUMO2) cross-link. 2 stretches are compositionally biased toward polar residues: residues 891 to 912 (SLPTETTPEVTRSPSPCKSPDT) and 943 to 952 (LQTASLSSGQ). The span at 962–983 (PSSPPPCPPVLTVATPPPPLLP) shows a compositional bias: pro residues. Residues 993 to 1009 (DASPQQCPSPFSNTTAQ) are compositionally biased toward polar residues. The segment covering 1010 to 1019 (SPLPILSPTV) has biased composition (low complexity). Over residues 1020-1030 (SPSPSPIPPVE) the composition is skewed to pro residues. Residues 1034 to 1062 (SAASPGPPTLSSSSSSSSSFPSSSCSSTS) show a composition bias toward low complexity. Over residues 1091-1106 (KQEESESEGLKPKEEA) the composition is skewed to basic and acidic residues. 3 consecutive C2H2-type zinc fingers follow at residues 1123-1145 (FICNVCESPFLSIKDLTKHLSVH), 1151-1174 (FKCEFCVQLFKVKTDLSEHRFLLH), and 1180-1203 (FVCSVCKKEFAFLCNLQQHQRDLH). Residues Lys-1136 and Lys-1140 each participate in a glycyl lysine isopeptide (Lys-Gly) (interchain with G-Cter in SUMO2) cross-link. Over residues 1218-1227 (LRPQNFTDPS) the composition is skewed to polar residues. Positions 1218 to 1251 (LRPQNFTDPSKANVEHMPSLPEEPLETSREEELN) are disordered. A Glycyl lysine isopeptide (Lys-Gly) (interchain with G-Cter in SUMO2) cross-link involves residue Lys-1269. A C2H2-type 7; atypical zinc finger spans residues 1321–1343 (IRCTKCGKGVDNMPELHKHILAC). The C2H2-type 8; atypical zinc finger occupies 1443–1465 (HICPYCDREFTYIGSLNKHAAFS). The disordered stretch occupies residues 1466 to 1563 (CPKKPLSPSK…KKASSSSLRN (98 aa)). Positions 1474–1486 (SKRKVSHSSKKGG) are enriched in basic residues. A compositionally biased stretch (low complexity) spans 1487–1498 (HASSSSSDRNSS). Residues 1528-1544 (GPAQASLPSSSFRSRQN) are compositionally biased toward polar residues. Residues 1548-1563 (AASVKSKKASSSSLRN) are compositionally biased toward low complexity.

Belongs to the class V-like SAM-binding methyltransferase superfamily. Binds to the retinoblastoma protein (RB). Interacts with GATA3.

The protein resides in the nucleus. It carries out the reaction L-lysyl-[histone] + S-adenosyl-L-methionine = N(6)-methyl-L-lysyl-[histone] + S-adenosyl-L-homocysteine + H(+). It catalyses the reaction L-lysyl(9)-[histone H3] + 3 S-adenosyl-L-methionine = N(6),N(6),N(6)-trimethyl-L-lysyl(9)-[histone H3] + 3 S-adenosyl-L-homocysteine + 3 H(+). In terms of biological role, S-adenosyl-L-methionine-dependent histone methyltransferase that specifically methylates 'Lys-9' of histone H3. May function as a DNA-binding transcription factor. Binds to the macrophage-specific TPA-responsive element (MTE) of the HMOX1 (heme oxygenase 1) gene and may act as a transcriptional activator of this gene. The protein is PR domain zinc finger protein 2 (Prdm2) of Rattus norvegicus (Rat).